The following is a 179-amino-acid chain: Dual-action ribosomal maturation protein DarP (179 aa).

Belongs to the DarP family.

It localises to the cytoplasm. Functionally, member of a network of 50S ribosomal subunit biogenesis factors which assembles along the 30S-50S interface, preventing incorrect 23S rRNA structures from forming. Promotes peptidyl transferase center (PTC) maturation. The chain is Dual-action ribosomal maturation protein DarP from Erwinia tasmaniensis (strain DSM 17950 / CFBP 7177 / CIP 109463 / NCPPB 4357 / Et1/99).